The following is a 461-amino-acid chain: tRNA modification GTPase MnmE (461 aa).

Residues K32, E89, and K128 each coordinate (6S)-5-formyl-5,6,7,8-tetrahydrofolate. Residues 224 to 387 enclose the TrmE-type G domain; it reads GHALSIVGKP…LGQKISAFFP (164 aa). N234 lines the K(+) pocket. Residues 234–239, 253–259, and 278–281 each bind GTP; these read NAGKSS, SDIKGTT, and DTAG. S238 lines the Mg(2+) pocket. The K(+) site is built by S253, I255, and T258. Position 259 (T259) interacts with Mg(2+). K461 contacts (6S)-5-formyl-5,6,7,8-tetrahydrofolate.

Belongs to the TRAFAC class TrmE-Era-EngA-EngB-Septin-like GTPase superfamily. TrmE GTPase family. Homodimer. Heterotetramer of two MnmE and two MnmG subunits. Requires K(+) as cofactor.

It is found in the cytoplasm. In terms of biological role, exhibits a very high intrinsic GTPase hydrolysis rate. Involved in the addition of a carboxymethylaminomethyl (cmnm) group at the wobble position (U34) of certain tRNAs, forming tRNA-cmnm(5)s(2)U34. This chain is tRNA modification GTPase MnmE, found in Helicobacter pylori (strain HPAG1).